Here is a 577-residue protein sequence, read N- to C-terminus: Sulfite reductase [NADPH] hemoprotein beta-component 2 (577 aa).

Residues Cys-441, Cys-447, Cys-486, and Cys-490 each contribute to the [4Fe-4S] cluster site. Cys-490 contacts siroheme.

It belongs to the nitrite and sulfite reductase 4Fe-4S domain family. In terms of assembly, alpha(8)-beta(8). The alpha component is a flavoprotein, the beta component is a hemoprotein. The cofactor is siroheme. Requires [4Fe-4S] cluster as cofactor.

The enzyme catalyses hydrogen sulfide + 3 NADP(+) + 3 H2O = sulfite + 3 NADPH + 4 H(+). It functions in the pathway sulfur metabolism; hydrogen sulfide biosynthesis; hydrogen sulfide from sulfite (NADPH route): step 1/1. Functionally, component of the sulfite reductase complex that catalyzes the 6-electron reduction of sulfite to sulfide. This is one of several activities required for the biosynthesis of L-cysteine from sulfate. This Pectobacterium carotovorum subsp. carotovorum (strain PC1) protein is Sulfite reductase [NADPH] hemoprotein beta-component 2.